The sequence spans 347 residues: NADH-quinone oxidoreductase subunit H (347 aa).

The next 8 membrane-spanning stretches (helical) occupy residues 21–41 (IAGILLIALPLMLGVAMIIYA), 87–107 (GLFLIAPIITFTVALMAWAVI), 120–140 (VGLLYVLAISSLGVYGVVIAG), 160–180 (ISYEVSIGFILICVVLWAGTF), 194–214 (WIINGFVANPLLFPMWVMFLI), 259–279 (LLMCALNAVLFWGGYLPPLDI), 282–302 (LYLVPGFVWLLLKILFFFFIF), and 324–344 (VFLPVSLLFVFLVSGYLMATG).

It belongs to the complex I subunit 1 family. As to quaternary structure, NDH-1 is composed of 14 different subunits. Subunits NuoA, H, J, K, L, M, N constitute the membrane sector of the complex.

It is found in the cell inner membrane. The catalysed reaction is a quinone + NADH + 5 H(+)(in) = a quinol + NAD(+) + 4 H(+)(out). Functionally, NDH-1 shuttles electrons from NADH, via FMN and iron-sulfur (Fe-S) centers, to quinones in the respiratory chain. The immediate electron acceptor for the enzyme in this species is believed to be ubiquinone. Couples the redox reaction to proton translocation (for every two electrons transferred, four hydrogen ions are translocated across the cytoplasmic membrane), and thus conserves the redox energy in a proton gradient. This subunit may bind ubiquinone. This Novosphingobium aromaticivorans (strain ATCC 700278 / DSM 12444 / CCUG 56034 / CIP 105152 / NBRC 16084 / F199) protein is NADH-quinone oxidoreductase subunit H.